A 149-amino-acid polypeptide reads, in one-letter code: MKTFTPKPADLTHDWYVIDATDVVLGRLATQAAILLRGKNKPTYAPHADSGNHVIIINADKIALTGNKMGKELYSHSGRPGGLRRDSYAELLEKNPERIIKNAVKGMLPKNRLAKVQLDRLRIFRGAEHPHTPQKPQVFEIAQVSQQAK.

It belongs to the universal ribosomal protein uL13 family. In terms of assembly, part of the 50S ribosomal subunit.

Its function is as follows. This protein is one of the early assembly proteins of the 50S ribosomal subunit, although it is not seen to bind rRNA by itself. It is important during the early stages of 50S assembly. The protein is Large ribosomal subunit protein uL13 of Bifidobacterium longum (strain DJO10A).